The chain runs to 45 residues: Osteocalcin (45 aa).

Positions 1 to 41 (AAGELTLTQLESLREVCEANLACEDMMDAQGIIAAYTAYYG) constitute a Gla domain. Residues Glu11, Glu15, Glu18, and Glu24 each coordinate Ca(2+). 4-carboxyglutamate is present on residues Glu11, Glu15, and Glu18. Residues Cys17 and Cys23 are joined by a disulfide bond.

The protein belongs to the osteocalcin/matrix Gla protein family. Gamma-carboxyglutamate residues are formed by vitamin K dependent carboxylation by GGCX. These residues are essential for the binding of calcium. In terms of tissue distribution, also found in smaller quantities in dentin.

The protein resides in the secreted. The carboxylated form is one of the main organic components of the bone matrix, which constitutes 1-2% of the total bone protein. The carboxylated form binds strongly to apatite and calcium. In Lepomis macrochirus (Bluegill), this protein is Osteocalcin (bglap).